The following is a 411-amino-acid chain: Citrate synthase (411 aa).

Catalysis depends on residues His304 and Asp363.

The protein belongs to the citrate synthase family.

It catalyses the reaction oxaloacetate + acetyl-CoA + H2O = citrate + CoA + H(+). It functions in the pathway carbohydrate metabolism; tricarboxylic acid cycle; isocitrate from oxaloacetate: step 1/2. The sequence is that of Citrate synthase (gltA) from Rickettsia australis.